The chain runs to 156 residues: Hexachlorocyclohexane dehydrochlorinase 2 (156 aa).

Residue D25 is part of the active site. H73 acts as the Proton acceptor in catalysis.

It belongs to the HCH dehydrochlorinase family. Homotrimer.

Its subcellular location is the periplasm. It catalyses the reaction gamma-hexachlorocyclohexane = (3R,4S,5S,6R)-pentachlorocyclohexene + chloride + H(+). The enzyme catalyses (3R,4S,5S,6R)-pentachlorocyclohexene = (3R,6R)-1,3,4,6-tetrachlorocyclohexa-1,4-diene + chloride + H(+). It participates in xenobiotic degradation; hexachlorocyclohexane degradation. Functionally, catalyzes the conversion of the important environmental pollutant gamma-hexachlorocyclohexane (gamma-HCH or lindane) to 1,3,4,6-tetrachloro-1,4-cyclohexadiene (1,4-TCDN) via gamma-pentachlorocyclohexene (gamma-PCCH). Proceeds by two successive 1,2-anti conformationally dependent dehydrochlorinations. Also shows activity with alpha- and delta-HCH, giving alpha- and delta-PCCH respectively, but not with the beta isomer. This is Hexachlorocyclohexane dehydrochlorinase 2 from Sphingobium indicum (strain DSM 16412 / CCM 7286 / MTCC 6364 / B90A).